The primary structure comprises 327 residues: MTTPAYLLANFGGPRHAKDLQEFLISLLTDRDVTGTFLPRVLHRHLFTFIAKKRVPKVLPQYQSLQNWSPIYFDTETLAKTLSEILRAPVIPFHRYLPSTHEKTLLALRTLHTRHVIGIPLFPHFTYSVTGSIVRFFMKHVPEIPISWIPQFGSDSKFVSLITCHIRDFLQKLGILEKECCFLFSVHGLPVRYISQGDPYSKQCYESFSAITTNFKQSENFLCFQSKFGPGKWLSPSTAQLCQNIDTDKPNVIVVPFGFISDHLETLYEIERDYLPLLRSRGYRALRIPAIYSSPLWVSTLVDIVKENSTVVAEELIKSGKKHTGIR.

Residues His-187 and Glu-265 each coordinate Fe cation.

Belongs to the ferrochelatase family.

It localises to the cytoplasm. It catalyses the reaction heme b + 2 H(+) = protoporphyrin IX + Fe(2+). It participates in porphyrin-containing compound metabolism; protoheme biosynthesis; protoheme from protoporphyrin-IX: step 1/1. In terms of biological role, catalyzes the ferrous insertion into protoporphyrin IX. The sequence is that of Ferrochelatase from Chlamydia pneumoniae (Chlamydophila pneumoniae).